Reading from the N-terminus, the 370-residue chain is Protein SUPPRESSOR OF NIM1 1 (370 aa).

An F-box domain is found at 1–43 (MALPWELEEDILSRLPPISLVRFRTVSKHWNSLFNDKTFINNH).

In terms of tissue distribution, ubiquitous, at low levels.

Negatively regulates a plant defense signaling pathway which is independent of salicylic acid (SA) and systemic acquired resistance (SAR). Confers sensitivity to P.syringae and P.parasitica. The protein is Protein SUPPRESSOR OF NIM1 1 (SON1) of Arabidopsis thaliana (Mouse-ear cress).